A 756-amino-acid polypeptide reads, in one-letter code: Putative beta-xylosidase (756 aa).

Positions 1 to 18 (MKKLLFTFLVSTGTIFFS) are cleaved as a signal peptide. Cys-19 is lipidated: N-palmitoyl cysteine. Cys-19 carries the S-diacylglycerol cysteine lipid modification.

Belongs to the glycosyl hydrolase 3 family.

The protein localises to the cell outer membrane. Functionally, glycoside hydrolase probably involved in ulvan degradation. Ulvan is the main polysaccharide component of the Ulvales (green seaweed) cell wall. It is composed of disaccharide building blocks comprising 3-sulfated rhamnose (Rha3S) linked to D-glucuronic acid (GlcA), L-iduronic acid (IduA), or D-xylose (Xyl). The chain is Putative beta-xylosidase from Formosa agariphila (strain DSM 15362 / KCTC 12365 / LMG 23005 / KMM 3901 / M-2Alg 35-1).